The sequence spans 316 residues: 4-hydroxy-3-methylbut-2-enyl diphosphate reductase (316 aa).

Cys12 lines the [4Fe-4S] cluster pocket. His41 and His74 together coordinate (2E)-4-hydroxy-3-methylbut-2-enyl diphosphate. Dimethylallyl diphosphate contacts are provided by His41 and His74. His41 and His74 together coordinate isopentenyl diphosphate. Residue Cys96 coordinates [4Fe-4S] cluster. His124 is a binding site for (2E)-4-hydroxy-3-methylbut-2-enyl diphosphate. Position 124 (His124) interacts with dimethylallyl diphosphate. His124 contributes to the isopentenyl diphosphate binding site. Catalysis depends on Glu126, which acts as the Proton donor. Position 168 (Thr168) interacts with (2E)-4-hydroxy-3-methylbut-2-enyl diphosphate. Residue Cys198 coordinates [4Fe-4S] cluster. The (2E)-4-hydroxy-3-methylbut-2-enyl diphosphate site is built by Ser226, Ser227, Asn228, and Ser270. Ser226, Ser227, Asn228, and Ser270 together coordinate dimethylallyl diphosphate. Isopentenyl diphosphate-binding residues include Ser226, Ser227, Asn228, and Ser270.

Belongs to the IspH family. The cofactor is [4Fe-4S] cluster.

The catalysed reaction is isopentenyl diphosphate + 2 oxidized [2Fe-2S]-[ferredoxin] + H2O = (2E)-4-hydroxy-3-methylbut-2-enyl diphosphate + 2 reduced [2Fe-2S]-[ferredoxin] + 2 H(+). It carries out the reaction dimethylallyl diphosphate + 2 oxidized [2Fe-2S]-[ferredoxin] + H2O = (2E)-4-hydroxy-3-methylbut-2-enyl diphosphate + 2 reduced [2Fe-2S]-[ferredoxin] + 2 H(+). Its pathway is isoprenoid biosynthesis; dimethylallyl diphosphate biosynthesis; dimethylallyl diphosphate from (2E)-4-hydroxy-3-methylbutenyl diphosphate: step 1/1. The protein operates within isoprenoid biosynthesis; isopentenyl diphosphate biosynthesis via DXP pathway; isopentenyl diphosphate from 1-deoxy-D-xylulose 5-phosphate: step 6/6. Functionally, catalyzes the conversion of 1-hydroxy-2-methyl-2-(E)-butenyl 4-diphosphate (HMBPP) into a mixture of isopentenyl diphosphate (IPP) and dimethylallyl diphosphate (DMAPP). Acts in the terminal step of the DOXP/MEP pathway for isoprenoid precursor biosynthesis. The chain is 4-hydroxy-3-methylbut-2-enyl diphosphate reductase from Acinetobacter baylyi (strain ATCC 33305 / BD413 / ADP1).